A 294-amino-acid polypeptide reads, in one-letter code: Nucleophosmin (294 aa).

An N-acetylmethionine modification is found at M1. The necessary for interaction with APEX1 stretch occupies residues 1 to 117 (MEDSMDMDMS…PVHISGQHLV (117 aa)). The segment at 1–186 (MEDSMDMDMS…DDDDFDDEEA (186 aa)) is required for interaction with SENP3. S4 carries the post-translational modification Phosphoserine; by PLK1 and PLK2. Position 10 is a phosphoserine (S10). K27 participates in a covalent cross-link: Glycyl lysine isopeptide (Lys-Gly) (interchain with G-Cter in SUMO2). K32 is subject to N6-acetyllysine; alternate. A Glycyl lysine isopeptide (Lys-Gly) (interchain with G-Cter in SUMO1); alternate cross-link involves residue K32. K32 participates in a covalent cross-link: Glycyl lysine isopeptide (Lys-Gly) (interchain with G-Cter in SUMO2); alternate. The residue at position 43 (S43) is a Phosphoserine. Y67 is modified (phosphotyrosine). S70 is modified (phosphoserine). 2 positions are modified to phosphothreonine: T75 and T95. Acidic residues predominate over residues 120–132 (EEDAESEDEEEED). Positions 120–247 (EEDAESEDEE…PKGPSSVEDI (128 aa)) are disordered. S125 is modified (phosphoserine; by CDK2). S137 and S139 each carry phosphoserine. Residue K141 forms a Glycyl lysine isopeptide (Lys-Gly) (interchain with G-Cter in SUMO2) linkage. K150 carries the N6-acetyllysine; alternate modification. K150 is covalently cross-linked (Glycyl lysine isopeptide (Lys-Gly) (interchain with G-Cter in SUMO2); alternate). The Nuclear localization signal motif lies at 152–157 (PQKKVK). K154 carries the N6-acetyllysine modification. Over residues 161 to 187 (DEDDDDDDEEDDDEDDDDDDFDDEEAE) the composition is skewed to acidic residues. The segment at 187 to 215 (EEKAPVKKSIRDTPAKNAQKSNQNGKDSK) is interaction with NOP2. Positions 188-200 (EKAPVKKSIRDTP) are enriched in basic and acidic residues. The Nuclear localization signal signature appears at 191–197 (PVKKSIR). T199 carries the phosphothreonine; by CDK1, CDK2 and CDK6 modification. A compositionally biased stretch (polar residues) spans 202-222 (KNAQKSNQNGKDSKPSSTPRS). S207 bears the ADP-ribosylserine mark. K212 is modified (N6-acetyllysine). K215 participates in a covalent cross-link: Glycyl lysine isopeptide (Lys-Gly) (interchain with G-Cter in SUMO2). The residue at position 219 (T219) is a Phosphothreonine; by CDK1. Residues 223 to 235 (KGQESFKKQEKTP) are compositionally biased toward basic and acidic residues. At S227 the chain carries Phosphoserine. An N6-acetyllysine modification is found at K229. Position 230 is an N6-acetyllysine; alternate (K230). K230 is covalently cross-linked (Glycyl lysine isopeptide (Lys-Gly) (interchain with G-Cter in SUMO); alternate). Residues T234 and T237 each carry the phosphothreonine; by CDK1 modification. Phosphoserine occurs at positions 242 and 243. The required for nucleolar localization stretch occupies residues 243 to 294 (SVEDIKAKMQASIEKGGSLPKVEAKFINYVKNCFRMTDQEAIQDLWQWRKSL). K248 is covalently cross-linked (Glycyl lysine isopeptide (Lys-Gly) (interchain with G-Cter in SUMO1); alternate). Glycyl lysine isopeptide (Lys-Gly) (interchain with G-Cter in SUMO2); alternate cross-links involve residues K248 and K250. K250 is subject to N6-acetyllysine; alternate. Phosphoserine is present on S254. K257 carries the post-translational modification N6-acetyllysine; alternate. Residue K257 forms a Glycyl lysine isopeptide (Lys-Gly) (interchain with G-Cter in SUMO1); alternate linkage. Residue K257 forms a Glycyl lysine isopeptide (Lys-Gly) (interchain with G-Cter in SUMO2); alternate linkage. K257 is subject to N6-acetyllysine. Position 260 is a phosphoserine (S260). Glycyl lysine isopeptide (Lys-Gly) (interchain with G-Cter in SUMO2); alternate cross-links involve residues K263, K267, and K273. A Glycyl lysine isopeptide (Lys-Gly) (interchain with G-Cter in SUMO); alternate cross-link involves residue K263. N6-acetyllysine; alternate is present on residues K267 and K273. Residue K267 forms a Glycyl lysine isopeptide (Lys-Gly) (interchain with G-Cter in SUMO1); alternate linkage. K267 is subject to N6-succinyllysine; alternate. Position 279 is a phosphothreonine (T279). The residue at position 292 (K292) is an N6-acetyllysine.

Belongs to the nucleoplasmin family. As to quaternary structure, decamer formed by two pentameric rings associated in a head-to-head fashion. Disulfide-linked dimers under certain conditions. The SWAP complex consists of NPM1, NCL, PARP1 and SWAP70. Interacts with NSUN2 and SENP3. Interacts with the methylated form of RPS10. Interacts (via N-terminal domain) with APEX1; the interaction is RNA-dependent and decreases in hydrogen peroxide-damaged cells. Interacts with isoform 1 of NEK2. Interacts with ROCK2 and BRCA2. Interacts with RPGR. Interacts with CENPW. Interacts with EIF2AK2/PKR. Interacts with CEBPA (isoform 4). Interacts with DDX31; this interaction prevents interaction between NPM1 and HDM2. Interacts with MYC; competitive with NOP53. Interacts with NOP53; the interaction is direct and competitive with MYC. Interacts with LRRC34. Interacts with RRP1B. Interacts with NPM3. Interacts with ALKBH2. Interacts with TTF1 (via C-terminal region). Interacts with NOP2. Interacts with ARID3C (via REKLES DOMAIN); the interaction mediates ARID3C nuclear shuttling. (Microbial infection) Interacts with hepatitis delta virus S-HDAg. In terms of assembly, (Microbial infection) Interacts with HTLV1 Rex protein (via N-terminal nuclear localization signal). In terms of processing, acetylated at C-terminal lysine residues, thereby increasing affinity to histones. Post-translationally, ADP-ribosylated. Phosphorylated at Ser-4 by PLK1 and PLK2. Phosphorylation at Ser-4 by PLK2 in S phase is required for centriole duplication and is sufficient to trigger centriole replication. Phosphorylation at Ser-4 by PLK1 takes place during mitosis. Phosphorylated by CDK2 at Ser-125 and Thr-199. Phosphorylation at Thr-199 may trigger initiation of centrosome duplication. Phosphorylated by CDK1 at Thr-199, Thr-219, Thr-234 and Thr-237 during cell mitosis. When these four sites are phosphorated, RNA-binding activity seem to be abolished. May be phosphorylated at Ser-70 by NEK2. The Thr-199 phosphorylated form has higher affinity for ROCK2. CDK6 triggers Thr-199 phosphorylation when complexed to Kaposi's sarcoma herpesvirus (KSHV) V-cyclin, leading to viral reactivation by reducing viral LANA levels. In terms of processing, sumoylated by ARF. Post-translationally, ubiquitinated. Ubiquitination leads to proteasomal degradation. Deubiquitinated by USP36.

The protein resides in the nucleus. It is found in the nucleolus. It localises to the nucleoplasm. Its subcellular location is the cytoplasm. The protein localises to the cytoskeleton. The protein resides in the microtubule organizing center. It is found in the centrosome. Functionally, involved in diverse cellular processes such as ribosome biogenesis, centrosome duplication, protein chaperoning, histone assembly, cell proliferation, and regulation of tumor suppressors p53/TP53 and ARF. Binds ribosome presumably to drive ribosome nuclear export. Associated with nucleolar ribonucleoprotein structures and bind single-stranded nucleic acids. Acts as a chaperonin for the core histones H3, H2B and H4. Stimulates APEX1 endonuclease activity on apurinic/apyrimidinic (AP) double-stranded DNA but inhibits APEX1 endonuclease activity on AP single-stranded RNA. May exert a control of APEX1 endonuclease activity within nucleoli devoted to repair AP on rDNA and the removal of oxidized rRNA molecules. In concert with BRCA2, regulates centrosome duplication. Regulates centriole duplication: phosphorylation by PLK2 is able to trigger centriole replication. Negatively regulates the activation of EIF2AK2/PKR and suppresses apoptosis through inhibition of EIF2AK2/PKR autophosphorylation. Antagonizes the inhibitory effect of ATF5 on cell proliferation and relieves ATF5-induced G2/M blockade. In complex with MYC enhances the transcription of MYC target genes. May act as chaperonin or cotransporter in the nucleolar localization of transcription termination factor TTF1. This chain is Nucleophosmin, found in Homo sapiens (Human).